A 265-amino-acid polypeptide reads, in one-letter code: Adenosylcobinamide-GDP ribazoletransferase (265 aa).

Helical transmembrane passes span 51-71 (LVGV…QLIF), 72-92 (PDSV…GAFH), 121-140 (IGTY…FVLW), and 203-223 (VASL…LFAF).

This sequence belongs to the CobS family. Mg(2+) is required as a cofactor.

It is found in the cell inner membrane. It carries out the reaction alpha-ribazole + adenosylcob(III)inamide-GDP = adenosylcob(III)alamin + GMP + H(+). The catalysed reaction is alpha-ribazole 5'-phosphate + adenosylcob(III)inamide-GDP = adenosylcob(III)alamin 5'-phosphate + GMP + H(+). It functions in the pathway cofactor biosynthesis; adenosylcobalamin biosynthesis; adenosylcobalamin from cob(II)yrinate a,c-diamide: step 7/7. Joins adenosylcobinamide-GDP and alpha-ribazole to generate adenosylcobalamin (Ado-cobalamin). Also synthesizes adenosylcobalamin 5'-phosphate from adenosylcobinamide-GDP and alpha-ribazole 5'-phosphate. The protein is Adenosylcobinamide-GDP ribazoletransferase of Vibrio parahaemolyticus serotype O3:K6 (strain RIMD 2210633).